Here is a 37-residue protein sequence, read N- to C-terminus: Photosystem II reaction center protein Y (37 aa).

Residues 4 to 22 (AIVVFAPIIAAVAWVVFNI) traverse the membrane as a helical segment.

The protein belongs to the PsbY family. In terms of assembly, PSII is composed of 1 copy each of membrane proteins PsbA, PsbB, PsbC, PsbD, PsbE, PsbF, PsbH, PsbI, PsbJ, PsbK, PsbL, PsbM, PsbT, PsbX, PsbY, Psb30/Ycf12, peripheral proteins PsbO, CyanoQ (PsbQ), PsbU, PsbV and a large number of cofactors. It forms dimeric complexes.

The protein localises to the cellular thylakoid membrane. In terms of biological role, loosely associated component of the core of photosystem II (PSII), it is not always seen in crystals. PSII is a light-driven water plastoquinone oxidoreductase, using light energy to abstract electrons from H(2)O, generating a proton gradient subsequently used for ATP formation. The protein is Photosystem II reaction center protein Y of Prochlorococcus marinus (strain MIT 9312).